The chain runs to 308 residues: Mycothiol acetyltransferase (308 aa).

N-acetyltransferase domains follow at residues 8–155 and 160–308; these read RDVD…PRLR and VQVR…RRAR. Glu39 contacts 1D-myo-inositol 2-(L-cysteinylamino)-2-deoxy-alpha-D-glucopyranoside. 84–86 is a binding site for acetyl-CoA; the sequence is LVV. Residues Glu187, Lys226, and Glu240 each contribute to the 1D-myo-inositol 2-(L-cysteinylamino)-2-deoxy-alpha-D-glucopyranoside site. Acetyl-CoA is bound by residues 244 to 246 and 251 to 257; these read LGI and QGLGLGR. Position 278 (Tyr278) interacts with 1D-myo-inositol 2-(L-cysteinylamino)-2-deoxy-alpha-D-glucopyranoside.

It belongs to the acetyltransferase family. MshD subfamily. Monomer.

It carries out the reaction 1D-myo-inositol 2-(L-cysteinylamino)-2-deoxy-alpha-D-glucopyranoside + acetyl-CoA = mycothiol + CoA + H(+). Catalyzes the transfer of acetyl from acetyl-CoA to desacetylmycothiol (Cys-GlcN-Ins) to form mycothiol. The polypeptide is Mycothiol acetyltransferase (Geodermatophilus obscurus (strain ATCC 25078 / DSM 43160 / JCM 3152 / CCUG 61914 / KCC A-0152 / KCTC 9177 / NBRC 13315 / NRRL B-3577 / G-20)).